Here is a 226-residue protein sequence, read N- to C-terminus: Ribose-5-phosphate isomerase A (226 aa).

Substrate-binding positions include 29 to 32 (TGST), 84 to 87 (DGAD), and 97 to 100 (KGGG). Glu106 (proton acceptor) is an active-site residue. Lys124 contacts substrate.

Belongs to the ribose 5-phosphate isomerase family. In terms of assembly, homodimer.

The catalysed reaction is aldehydo-D-ribose 5-phosphate = D-ribulose 5-phosphate. It participates in carbohydrate degradation; pentose phosphate pathway; D-ribose 5-phosphate from D-ribulose 5-phosphate (non-oxidative stage): step 1/1. Its function is as follows. Catalyzes the reversible conversion of ribose-5-phosphate to ribulose 5-phosphate. The protein is Ribose-5-phosphate isomerase A of Methanothermobacter thermautotrophicus (strain ATCC 29096 / DSM 1053 / JCM 10044 / NBRC 100330 / Delta H) (Methanobacterium thermoautotrophicum).